The following is a 417-amino-acid chain: 3-ketoacyl-CoA thiolase, peroxisomal (417 aa).

Residues 1–15 (MSQRLQSIKDHLVES) constitute a peroxisome transit peptide. Positions 1-15 (MSQRLQSIKDHLVES) are PTS2-type peroxisomal targeting signal. C125 (acyl-thioester intermediate) is an active-site residue. Active-site proton acceptor residues include H375 and C403.

Belongs to the thiolase-like superfamily. Thiolase family. Homodimer. Interacts (via PTS2-type peroxisomal targeting signal region) with PEX7; leading to its translocation into peroxisomes.

It localises to the peroxisome. It is found in the mitochondrion intermembrane space. It carries out the reaction an acyl-CoA + acetyl-CoA = a 3-oxoacyl-CoA + CoA. The protein operates within lipid metabolism; fatty acid metabolism. Its function is as follows. Responsible for the thiolytic cleavage of straight chain 3-keto fatty acyl-CoAs (3-oxoacyl-CoAs). In Saccharomyces cerevisiae (strain ATCC 204508 / S288c) (Baker's yeast), this protein is 3-ketoacyl-CoA thiolase, peroxisomal (POT1).